Consider the following 226-residue polypeptide: UPF0173 metal-dependent hydrolase Msed_2125 (226 aa).

This sequence belongs to the UPF0173 family.

This Metallosphaera sedula (strain ATCC 51363 / DSM 5348 / JCM 9185 / NBRC 15509 / TH2) protein is UPF0173 metal-dependent hydrolase Msed_2125.